The sequence spans 381 residues: Probable G-protein coupled receptor 34 (381 aa).

Over 1 to 61 (MRSHTITMTT…LLSTVLTTSY (61 aa)) the chain is Extracellular. N-linked (GlcNAc...) asparagine glycosylation is found at Asn-28, Asn-36, and Asn-42. A helical membrane pass occupies residues 62–82 (SVIFIVGLVGNIIALYVFLGI). Over 83-88 (HRKRNS) the chain is Cytoplasmic. Residues 89 to 109 (IQIYLLNVAIADLLLIFCLPF) form a helical membrane-spanning segment. The Extracellular segment spans residues 110 to 128 (RIMYHINQNKWTLGVILCK). Cys-127 and Cys-204 are oxidised to a cystine. A helical membrane pass occupies residues 129-149 (VVGTLFYMNMYISIILLGFIS). Residues 150–171 (LDRYIKINRSIQQRKAITTKQS) lie on the Cytoplasmic side of the membrane. A helical membrane pass occupies residues 172-192 (IYVCCIVWMLALGGFLTMIIL). Topologically, residues 193–216 (TLKKGGHNSTMCFHYRDKHNAKGE) are extracellular. The N-linked (GlcNAc...) asparagine glycan is linked to Asn-200. The helical transmembrane segment at 217–237 (AIFNFILVVMFWLIFLLIILS) threads the bilayer. Topologically, residues 238-269 (YIKIGKNLLRISKRRSKFPNSGKYATTARNSF) are cytoplasmic. The chain crosses the membrane as a helical span at residues 270 to 290 (IVLIIFTICFVPYHAFRFIYI). At 291-310 (SSQLNVSSCYWKEIVHKTNE) the chain is on the extracellular side. Asn-295 carries N-linked (GlcNAc...) asparagine glycosylation. Residues 311-331 (IMLVLSSFNSCLDPVMYFLMS) form a helical membrane-spanning segment. Over 332-381 (SNIRKIMCQLLFRRFQGEPSRSESTSEFKPGYSLHDTSVAVKIQSSSKST) the chain is Cytoplasmic.

It belongs to the G-protein coupled receptor 1 family.

It is found in the cell membrane. In terms of biological role, G-protein-coupled receptor of lysophosphatidylserine (LysoPS) that plays different roles in immune response. Acts a damage-sensing receptor that triggers tissue repair upon recognition of dying neutrophils. Mechanistically, apoptotic neutrophils release lysophosphatydilserine that are recognized by type 3 innate lymphoid cells (ILC3s) via GPR34, which activates downstream PI3K-AKT and RAS-ERK signaling pathways leading to STAT3 activation and IL-22 production. Plays an important role in microglial function, controlling morphology and phagocytosis. This is Probable G-protein coupled receptor 34 (GPR34) from Gorilla gorilla gorilla (Western lowland gorilla).